The sequence spans 140 residues: Large ribosomal subunit protein bL17 (140 aa).

Belongs to the bacterial ribosomal protein bL17 family. In terms of assembly, part of the 50S ribosomal subunit. Contacts protein L32.

The chain is Large ribosomal subunit protein bL17 from Rhizobium johnstonii (strain DSM 114642 / LMG 32736 / 3841) (Rhizobium leguminosarum bv. viciae).